The primary structure comprises 585 residues: CTP synthase (585 aa).

The tract at residues 1 to 281 (MPALRKHPHT…DAYVVRRLNL (281 aa)) is amidoligase domain. Serine 23 serves as a coordination point for CTP. Position 23 (serine 23) interacts with UTP. ATP-binding positions include 24-29 (SLGKGL) and aspartate 81. Mg(2+)-binding residues include aspartate 81 and glutamate 155. Residues 162-164 (DIE), 202-207 (KTKPTQ), and lysine 238 each bind CTP. UTP-binding positions include 202 to 207 (KTKPTQ) and lysine 238. The Glutamine amidotransferase type-1 domain occupies 306 to 554 (RIALVGKYID…VGAAVEYNNG (249 aa)). Glycine 369 contributes to the L-glutamine binding site. The active-site Nucleophile; for glutamine hydrolysis is cysteine 396. L-glutamine-binding positions include 397–400 (LGLQ), glutamate 419, and arginine 480. Active-site residues include histidine 527 and glutamate 529. The tract at residues 564-585 (IPTADHQSNGAEHALEDAPARG) is disordered. Residues 576-585 (HALEDAPARG) are compositionally biased toward basic and acidic residues.

It belongs to the CTP synthase family. In terms of assembly, homotetramer.

The catalysed reaction is UTP + L-glutamine + ATP + H2O = CTP + L-glutamate + ADP + phosphate + 2 H(+). The enzyme catalyses L-glutamine + H2O = L-glutamate + NH4(+). It carries out the reaction UTP + NH4(+) + ATP = CTP + ADP + phosphate + 2 H(+). The protein operates within pyrimidine metabolism; CTP biosynthesis via de novo pathway; CTP from UDP: step 2/2. Its activity is regulated as follows. Allosterically activated by GTP, when glutamine is the substrate; GTP has no effect on the reaction when ammonia is the substrate. The allosteric effector GTP functions by stabilizing the protein conformation that binds the tetrahedral intermediate(s) formed during glutamine hydrolysis. Inhibited by the product CTP, via allosteric rather than competitive inhibition. Its function is as follows. Catalyzes the ATP-dependent amination of UTP to CTP with either L-glutamine or ammonia as the source of nitrogen. Regulates intracellular CTP levels through interactions with the four ribonucleotide triphosphates. The sequence is that of CTP synthase from Mycolicibacterium gilvum (strain PYR-GCK) (Mycobacterium gilvum (strain PYR-GCK)).